Consider the following 143-residue polypeptide: Small ribosomal subunit protein uS12 (143 aa).

The segment covering 1–19 (MGKPKGIRAARKLKTHRQA) has biased composition (basic residues). A disordered region spans residues 1-21 (MGKPKGIRAARKLKTHRQAQR). At Pro-62 the chain carries Hydroxyproline.

Belongs to the universal ribosomal protein uS12 family. As to quaternary structure, component of the 40S small ribosomal subunit.

The protein resides in the cytoplasm. It is found in the cytosol. Its subcellular location is the rough endoplasmic reticulum. This Brugia malayi (Filarial nematode worm) protein is Small ribosomal subunit protein uS12 (rps-23).